The chain runs to 318 residues: Carnitine monooxygenase reductase subunit (318 aa).

Positions 5 to 107 constitute an FAD-binding FR-type domain; the sequence is YEMFPAVVTR…SEPKNLFPLA (103 aa). The 2Fe-2S ferredoxin-type domain maps to 233–318; that stretch reads FTVVLAKSNQ…AKGKKLVLDL (86 aa). Positions 267, 272, 275, and 305 each coordinate [2Fe-2S] cluster.

This sequence belongs to the PDR/VanB family. CntB subfamily. In terms of assembly, composed of an oxygenase subunit (cntA) and a reductase subunit (cntB). The cofactor is FMN. [2Fe-2S] cluster serves as cofactor.

The catalysed reaction is (R)-carnitine + NADH + O2 + H(+) = (3R)-3-hydroxy-4-oxobutanoate + trimethylamine + NAD(+) + H2O. It catalyses the reaction (R)-carnitine + NADPH + O2 + H(+) = (3R)-3-hydroxy-4-oxobutanoate + trimethylamine + NADP(+) + H2O. The protein operates within amine and polyamine metabolism; carnitine metabolism. Converts carnitine to trimethylamine and malic semialdehyde. The protein is Carnitine monooxygenase reductase subunit of Acinetobacter baumannii (strain ATCC 19606 / DSM 30007 / JCM 6841 / CCUG 19606 / CIP 70.34 / NBRC 109757 / NCIMB 12457 / NCTC 12156 / 81).